A 392-amino-acid chain; its full sequence is Copper-containing nitrite reductase (392 aa).

A signal peptide spans 1 to 18 (MKRQALAAMIASLFALAA). A lipid anchor (N-palmitoyl cysteine) is attached at Cys19. Cys19 carries S-diacylglycerol cysteine lipidation. The segment at 30-49 (ETPAASAEAASSAAQATAET) is disordered. 2 consecutive Plastocyanin-like domains span residues 101–195 (WTFD…ILVE) and 245–346 (GHVG…LKVE). Residues His134, His139, His174, Cys175, His183, and Met188 each coordinate Cu cation. A substrate-binding site is contributed by His139. His280 lines the substrate pocket. His329 contributes to the Cu cation binding site. Positions 367-392 (GAASAPAASAPAASAPAASASEKSVY) are disordered. Repeat copies occupy residues 368–372 (AASAP), 373–377 (AASAP), 378–382 (AASAP), and 383–387 (AASAS). Residues 368 to 387 (AASAPAASAPAASAPAASAS) form a 4 X 5 AA tandem repeats of A-A-S-A-P region.

This sequence belongs to the multicopper oxidase family. In terms of assembly, homotrimer. Cu(+) serves as cofactor. Cu(2+) is required as a cofactor. Palmitoylated.

The protein localises to the cell outer membrane. The enzyme catalyses nitric oxide + Fe(III)-[cytochrome c] + H2O = Fe(II)-[cytochrome c] + nitrite + 2 H(+). In terms of biological role, catalyzes the reduction of nitrite to nitric oxide (NO), probably with azurin as electron donor. Essential for growth and survival in oxygen-depleted environments. Can also provide protection against killing by normal human sera. The polypeptide is Copper-containing nitrite reductase (aniA) (Neisseria gonorrhoeae).